The sequence spans 277 residues: Alpha carbonic anhydrase 3 (277 aa).

The first 19 residues, methionine 1 to alanine 19, serve as a signal peptide directing secretion. Residues threonine 24 to glutamate 259 enclose the Alpha-carbonic anhydrase domain. The cysteines at positions 49 and 209 are disulfide-linked. Residues asparagine 70 and asparagine 107 are each glycosylated (N-linked (GlcNAc...) asparagine). Zn(2+) contacts are provided by histidine 117, histidine 119, and histidine 136. A substrate-binding site is contributed by threonine 205 to threonine 206. Residues leucine 257 to valine 277 form a disordered region.

The protein belongs to the alpha-class carbonic anhydrase family. Requires Zn(2+) as cofactor. N-glycosylated. Expressed in flowers and siliques.

The protein localises to the plastid. Its subcellular location is the chloroplast stroma. It carries out the reaction hydrogencarbonate + H(+) = CO2 + H2O. Functionally, reversible hydration of carbon dioxide. This Arabidopsis thaliana (Mouse-ear cress) protein is Alpha carbonic anhydrase 3 (ACA3).